The following is a 77-amino-acid chain: MKLIIFTGLVLFAIVSLIEAQAENEKACLPQYQVCTDAPGNCCSDLVCDCYGRYKCGARIGRNCFCLQKGVIYKREN.

The N-terminal stretch at 1–20 (MKLIIFTGLVLFAIVSLIEA) is a signal peptide. A propeptide spanning residues 21-26 (QAENEK) is cleaved from the precursor.

Belongs to the neurotoxin 19 (CSTX) family. 08 (U8-Lctx) subfamily. Contains 4 disulfide bonds. Expressed by the venom gland.

The protein resides in the secreted. This is U8-lycotoxin-Ls1a from Lycosa singoriensis (Wolf spider).